Here is a 357-residue protein sequence, read N- to C-terminus: Peptide chain release factor 1 (357 aa).

Q232 carries the N5-methylglutamine modification. Over residues 281–305 the composition is skewed to basic and acidic residues; it reads DRQHNEMAADRRSQVGSGDRSERIR. The segment at 281-309 is disordered; sequence DRQHNEMAADRRSQVGSGDRSERIRTYNF.

Belongs to the prokaryotic/mitochondrial release factor family. Post-translationally, methylated by PrmC. Methylation increases the termination efficiency of RF1.

The protein localises to the cytoplasm. Functionally, peptide chain release factor 1 directs the termination of translation in response to the peptide chain termination codons UAG and UAA. The protein is Peptide chain release factor 1 of Nitratidesulfovibrio vulgaris (strain DSM 19637 / Miyazaki F) (Desulfovibrio vulgaris).